Here is a 495-residue protein sequence, read N- to C-terminus: Probable aminotransferase ACS12 (495 aa).

At Lys334 the chain carries N6-(pyridoxal phosphate)lysine.

It belongs to the class-I pyridoxal-phosphate-dependent aminotransferase family. As to quaternary structure, homodimer. It depends on pyridoxal 5'-phosphate as a cofactor. Expressed in roots. Expressed at low level in leaves, stems, flowers and siliques.

In terms of biological role, probable aminotransferase. Does not have 1-aminocyclopropane-1-carboxylate synthase (ACS) activity, suggesting that it is not involved in ethylene biosynthesis. This Arabidopsis thaliana (Mouse-ear cress) protein is Probable aminotransferase ACS12 (ACS12).